A 691-amino-acid polypeptide reads, in one-letter code: Dipeptidyl peptidase 3 (691 aa).

His431 serves as a coordination point for Zn(2+). The active site involves Glu432. Residues His436 and Glu492 each coordinate Zn(2+).

The protein belongs to the peptidase M49 family. It depends on Zn(2+) as a cofactor.

The protein localises to the cytoplasm. The catalysed reaction is Release of an N-terminal dipeptide from a peptide comprising four or more residues, with broad specificity. Also acts on dipeptidyl 2-naphthylamides.. The polypeptide is Dipeptidyl peptidase 3 (dpp3-1) (Dictyostelium discoideum (Social amoeba)).